We begin with the raw amino-acid sequence, 340 residues long: tRNA N6-adenosine threonylcarbamoyltransferase (340 aa).

Positions 115 and 119 each coordinate Fe cation. Substrate is bound by residues 138 to 142 (VVSGG), D171, G184, D188, and N278. D306 lines the Fe cation pocket.

Belongs to the KAE1 / TsaD family. It depends on Fe(2+) as a cofactor.

It localises to the cytoplasm. The enzyme catalyses L-threonylcarbamoyladenylate + adenosine(37) in tRNA = N(6)-L-threonylcarbamoyladenosine(37) in tRNA + AMP + H(+). In terms of biological role, required for the formation of a threonylcarbamoyl group on adenosine at position 37 (t(6)A37) in tRNAs that read codons beginning with adenine. Is involved in the transfer of the threonylcarbamoyl moiety of threonylcarbamoyl-AMP (TC-AMP) to the N6 group of A37, together with TsaE and TsaB. TsaD likely plays a direct catalytic role in this reaction. The protein is tRNA N6-adenosine threonylcarbamoyltransferase of Clostridium botulinum (strain Hall / ATCC 3502 / NCTC 13319 / Type A).